The following is a 146-amino-acid chain: Large ribosomal subunit protein uL15 (146 aa).

Residues 1–54 (MKLHELRPAAGSKSAPKRVGRGTGSGLGRNAGKGEKGQNARSGGGVRPGFEGGQ) form a disordered region. Gly residues-rich tracts occupy residues 21–31 (RGTGSGLGRNA) and 42–52 (SGGGVRPGFEG).

This sequence belongs to the universal ribosomal protein uL15 family. In terms of assembly, part of the 50S ribosomal subunit.

In terms of biological role, binds to the 23S rRNA. This chain is Large ribosomal subunit protein uL15, found in Clostridium perfringens (strain ATCC 13124 / DSM 756 / JCM 1290 / NCIMB 6125 / NCTC 8237 / Type A).